The chain runs to 968 residues: RNA polymerase-associated protein RapA (968 aa).

Residues 163-332 (EVGSRYAPRV…FARLRLLDPD (170 aa)) form the Helicase ATP-binding domain. Residue 176-183 (DEVGLGKT) coordinates ATP. Positions 278–281 (DEAH) match the DEAH box motif. The 165-residue stretch at 491 to 655 (RVDWLIEFLK…EFADELINVL (165 aa)) folds into the Helicase C-terminal domain.

It belongs to the SNF2/RAD54 helicase family. RapA subfamily. Interacts with the RNAP. Has a higher affinity for the core RNAP than for the holoenzyme. Its ATPase activity is stimulated by binding to RNAP.

Its function is as follows. Transcription regulator that activates transcription by stimulating RNA polymerase (RNAP) recycling in case of stress conditions such as supercoiled DNA or high salt concentrations. Probably acts by releasing the RNAP, when it is trapped or immobilized on tightly supercoiled DNA. Does not activate transcription on linear DNA. Probably not involved in DNA repair. In Shewanella frigidimarina (strain NCIMB 400), this protein is RNA polymerase-associated protein RapA.